The following is a 236-amino-acid chain: 3-deoxy-D-manno-octulosonic acid kinase (236 aa).

The active site involves Asp-166.

The protein belongs to the protein kinase superfamily. KdkA/RfaP family.

The protein localises to the cell inner membrane. It carries out the reaction an alpha-Kdo-(2-&gt;6)-lipid IVA + ATP = a 4-O-phospho-alpha-Kdo-(2-&gt;6)-lipid IVA + ADP + H(+). The protein operates within bacterial outer membrane biogenesis; LPS core biosynthesis. Functionally, catalyzes the ATP-dependent phosphorylation of the 3-deoxy-D-manno-octulosonic acid (Kdo) residue in Kdo-lipid IV(A) at the 4-OH position. The polypeptide is 3-deoxy-D-manno-octulosonic acid kinase (Photobacterium profundum (strain SS9)).